Consider the following 191-residue polypeptide: MKYIQTDQILDIPEGVTVDIKARVVKVTGPRGELTKDLKHIDVTFNKINNRAIKITVHNGDRKHVAALRTVKSLIANLITGVTKGYKYKMRFVYAHFPINVNIIKKDGQDYVEIRNFLGEKRVREVKIHEGVTMEISSTQKDELIVSGNSLEAVSQNAADIQQICRVRNKDIRKFLDGIYVSERGTIVEEI.

The protein belongs to the universal ribosomal protein uL6 family. Component of the large ribosomal subunit. Mature ribosomes consist of a small (40S) and a large (60S) subunit. The 40S subunit contains about 32 different proteins and 1 molecule of RNA (18S). The 60S subunit contains 45 different proteins and 3 molecules of RNA (25S, 5.8S and 5S).

The protein resides in the cytoplasm. Component of the ribosome, a large ribonucleoprotein complex responsible for the synthesis of proteins in the cell. The small ribosomal subunit (SSU) binds messenger RNAs (mRNAs) and translates the encoded message by selecting cognate aminoacyl-transfer RNA (tRNA) molecules. The large subunit (LSU) contains the ribosomal catalytic site termed the peptidyl transferase center (PTC), which catalyzes the formation of peptide bonds, thereby polymerizing the amino acids delivered by tRNAs into a polypeptide chain. The nascent polypeptides leave the ribosome through a tunnel in the LSU and interact with protein factors that function in enzymatic processing, targeting, and the membrane insertion of nascent chains at the exit of the ribosomal tunnel. The polypeptide is Large ribosomal subunit protein uL6 (Candida albicans (strain SC5314 / ATCC MYA-2876) (Yeast)).